The primary structure comprises 422 residues: Glutamate-1-semialdehyde 2,1-aminomutase (422 aa).

K258 is subject to N6-(pyridoxal phosphate)lysine.

The protein belongs to the class-III pyridoxal-phosphate-dependent aminotransferase family. HemL subfamily. As to quaternary structure, homodimer. It depends on pyridoxal 5'-phosphate as a cofactor.

It is found in the cytoplasm. The catalysed reaction is (S)-4-amino-5-oxopentanoate = 5-aminolevulinate. The protein operates within porphyrin-containing compound metabolism; protoporphyrin-IX biosynthesis; 5-aminolevulinate from L-glutamyl-tRNA(Glu): step 2/2. The polypeptide is Glutamate-1-semialdehyde 2,1-aminomutase (Chlamydia trachomatis serovar D (strain ATCC VR-885 / DSM 19411 / UW-3/Cx)).